Here is a 125-residue protein sequence, read N- to C-terminus: Large ribosomal subunit protein bL21 (125 aa).

The protein belongs to the bacterial ribosomal protein bL21 family. Part of the 50S ribosomal subunit. Contacts protein L20.

In terms of biological role, this protein binds to 23S rRNA in the presence of protein L20. This Synechococcus sp. (strain CC9902) protein is Large ribosomal subunit protein bL21.